The following is a 186-amino-acid chain: Serine hydrolase RBBP9 (186 aa).

An involved in binding to RB1 region spans residues 63-67 (LHCDE). Catalysis depends on charge relay system residues serine 75, aspartate 138, and histidine 165.

The protein belongs to the RBBP9 family. Interacts with RB1; the interaction disrupts RB1 binding to E2F1. Interacts with RBL1 and RBL2. As to expression, expressed at higher levels in tumor tissues such as carcinoma.

It carries out the reaction valacyclovir + H2O = acyclovir + L-valine + H(+). With respect to regulation, inhibited by the natural product emetine produced by the ipecac root. Its function is as follows. Serine hydrolase. Catalyzes the hydrolytic activation of amino acid ester of the antiviral prodrug valacyclovir to its corresponding active drug, acyclovir. May negatively regulate basal or autocrine TGF-beta signaling by suppressing SMAD2-SMAD3 phosphorylation. May play a role in the transformation process due to its capacity to confer resistance to the growth-inhibitory effects of TGF-beta through interaction with RB1 and the subsequent displacement of E2F1. The sequence is that of Serine hydrolase RBBP9 from Homo sapiens (Human).